A 431-amino-acid chain; its full sequence is Reverse prenyltransferase criA (431 aa).

8 residues coordinate dimethylallyl diphosphate: R104, K193, Y195, K262, Y264, Y347, Y412, and Y416.

This sequence belongs to the tryptophan dimethylallyltransferase family. In terms of assembly, monomer.

It catalyses the reaction cyclo(L-tryptophyl-L-alanyl) + dimethylallyl diphosphate = preechinulin + diphosphate. It participates in secondary metabolite biosynthesis. Its pathway is alkaloid biosynthesis. Functionally, reverse prenyltransferase; part of the gene cluster that mediates the biosynthesis of echinulin family alkaloid. The pathway begins with the biosynthesis of the cyclic dipeptide cyclo-L-Trp-L-Ala (cyclo-TA) by the NRPS criC via condensation of L-alanine and L-tryptophan. The prenyltransferase criA then catalyzes the first prenylation step, a reverse prenylation reaction at C2, to yield preechinulin. Preechinulin is the substrate of the cytochrome P450 monooxygenase criE that catalyzes the formation of the double bond between C10 and C11 to produce neoechulin A. The unique prenyltransferase criF functions as a competitive enzyme with criE for preechinulin metabolization and uses preechinulin for effective regiospecific prenylations. Preechinulin is prenylated by criF at C5 or C7. C7-prenylation leads to accumulation of tardioxopiperazine B without further modification by criF. In contrast, the C5-prenylated tardioxopiperazine A can be prenylated again by criF, predominantly at C7 to form echinulin or less frequently at C4 to give variecolorin L. CriF also accepts neoechilunin A to produce varlecolorin G (prenylation at C5) or isoechinulin A (prenylation at C7). CriF further converts isoechinulin A into dehydroechinulin. Moreover, a yet unidentified enzyme can also convert neoechilunin A into neoechilunin B by introducing a double bond between positions C14 and C17 and thus provides a further substrate to criF for C5 and C7 prenylation. In Aspergillus cristatus (Chinese Fuzhuan brick tea-fermentation fungus), this protein is Reverse prenyltransferase criA.